The primary structure comprises 257 residues: Phosphate import ATP-binding protein PstB (257 aa).

An ABC transporter domain is found at 5–246 (LEIKDLTAFY…EVIFTSPKNE (242 aa)). Residue 37–44 (GPSGCGKS) participates in ATP binding.

Belongs to the ABC transporter superfamily. Phosphate importer (TC 3.A.1.7) family. The complex is composed of two ATP-binding proteins (PstB), two transmembrane proteins (PstC and PstA) and a solute-binding protein (PstS).

It is found in the cell membrane. The enzyme catalyses phosphate(out) + ATP + H2O = ADP + 2 phosphate(in) + H(+). Part of the ABC transporter complex PstSACB involved in phosphate import. Responsible for energy coupling to the transport system. The polypeptide is Phosphate import ATP-binding protein PstB (Tropheryma whipplei (strain Twist) (Whipple's bacillus)).